The following is a 341-amino-acid chain: UDP-3-O-(3-hydroxymyristoyl)glucosamine N-acyltransferase (341 aa).

His-239 (proton acceptor) is an active-site residue.

Belongs to the transferase hexapeptide repeat family. LpxD subfamily. In terms of assembly, homotrimer.

The catalysed reaction is a UDP-3-O-[(3R)-3-hydroxyacyl]-alpha-D-glucosamine + a (3R)-hydroxyacyl-[ACP] = a UDP-2-N,3-O-bis[(3R)-3-hydroxyacyl]-alpha-D-glucosamine + holo-[ACP] + H(+). The enzyme catalyses UDP-3-O-[(3R)-3-hydroxytetradecanoyl]-alpha-D-glucosamine + (3R)-hydroxytetradecanoyl-[ACP] = UDP-2-N,3-O-bis[(3R)-3-hydroxytetradecanoyl]-alpha-D-glucosamine + holo-[ACP] + H(+). Its pathway is glycolipid biosynthesis; lipid IV(A) biosynthesis; lipid IV(A) from (3R)-3-hydroxytetradecanoyl-[acyl-carrier-protein] and UDP-N-acetyl-alpha-D-glucosamine: step 3/6. In terms of biological role, catalyzes the N-acylation of UDP-3-O-(hydroxytetradecanoyl)glucosamine using 3-hydroxytetradecanoyl-ACP as the acyl donor. Is involved in the biosynthesis of lipid A, a phosphorylated glycolipid that anchors the lipopolysaccharide to the outer membrane of the cell. This Salmonella paratyphi A (strain ATCC 9150 / SARB42) protein is UDP-3-O-(3-hydroxymyristoyl)glucosamine N-acyltransferase.